Reading from the N-terminus, the 64-residue chain is Large ribosomal subunit protein bL35 (64 aa).

The span at 1–26 (MPKMKTKSAAAKRFKTTKSGKIKRKQ) shows a compositional bias: basic residues. The disordered stretch occupies residues 1–46 (MPKMKTKSAAAKRFKTTKSGKIKRKQAYTSHLAPNKTTKQKRHLRK).

The protein belongs to the bacterial ribosomal protein bL35 family.

The sequence is that of Large ribosomal subunit protein bL35 from Mycoplasmoides gallisepticum (strain R(low / passage 15 / clone 2)) (Mycoplasma gallisepticum).